The following is a 333-amino-acid chain: Succinylglutamate desuccinylase (333 aa).

Zn(2+) is bound by residues His56, Glu59, and His149. Residue Glu214 is part of the active site.

This sequence belongs to the AspA/AstE family. Succinylglutamate desuccinylase subfamily. It depends on Zn(2+) as a cofactor.

It catalyses the reaction N-succinyl-L-glutamate + H2O = L-glutamate + succinate. It participates in amino-acid degradation; L-arginine degradation via AST pathway; L-glutamate and succinate from L-arginine: step 5/5. In terms of biological role, transforms N(2)-succinylglutamate into succinate and glutamate. This Chromobacterium violaceum (strain ATCC 12472 / DSM 30191 / JCM 1249 / CCUG 213 / NBRC 12614 / NCIMB 9131 / NCTC 9757 / MK) protein is Succinylglutamate desuccinylase.